Reading from the N-terminus, the 262-residue chain is Phosphatidylglycerol--prolipoprotein diacylglyceryl transferase (262 aa).

4 helical membrane passes run 17–37, 59–79, 94–114, and 121–141; these read FAIH…LLLG, LLFA…TLFY, IWEG…ALYW, and TTFF…LAFG. An a 1,2-diacyl-sn-glycero-3-phospho-(1'-sn-glycerol)-binding site is contributed by R142. Helical transmembrane passes span 176–196, 201–221, and 231–251; these read QIYQ…FYAG, VGQV…LAEY, and LLGL…FFGI.

It belongs to the Lgt family.

The protein localises to the cell inner membrane. It carries out the reaction L-cysteinyl-[prolipoprotein] + a 1,2-diacyl-sn-glycero-3-phospho-(1'-sn-glycerol) = an S-1,2-diacyl-sn-glyceryl-L-cysteinyl-[prolipoprotein] + sn-glycerol 1-phosphate + H(+). Its pathway is protein modification; lipoprotein biosynthesis (diacylglyceryl transfer). Catalyzes the transfer of the diacylglyceryl group from phosphatidylglycerol to the sulfhydryl group of the N-terminal cysteine of a prolipoprotein, the first step in the formation of mature lipoproteins. The chain is Phosphatidylglycerol--prolipoprotein diacylglyceryl transferase from Polynucleobacter necessarius subsp. necessarius (strain STIR1).